The sequence spans 172 residues: MSNPRVFFDMSLSGTPIGRIEMELFADTTPNTAENFRALCTGEKGMGKLGKPLHFKGSIFHRVIPGFMCQGGDFTAKNGTGGESIYGAKFKDENFIKKHTGAGILSMANSGPNTNGSQFFICTDKTSWLDGKHVVFGQVVKGLDVVKAIEKVGSDSGKTSKVVTITDCGQLS.

A PPIase cyclophilin-type domain is found at 7–170 (FFDMSLSGTP…KVVTITDCGQ (164 aa)).

Belongs to the cyclophilin-type PPIase family. In terms of assembly, interacts with A.tumefaciens VirD2. Ubiquitous, with higher levels in roots and flowers. Confined to vascular tissues. Also detected in stigmas, base of siliques and anthers.

Its subcellular location is the cytoplasm. The catalysed reaction is [protein]-peptidylproline (omega=180) = [protein]-peptidylproline (omega=0). Binds cyclosporin A (CsA). CsA mediates some of its effects via an inhibitory action on PPIase. In terms of biological role, PPIases accelerate the folding of proteins. It catalyzes the cis-trans isomerization of proline imidic peptide bonds in oligopeptides. This chain is Peptidyl-prolyl cis-trans isomerase CYP18-4 (CYP18-4), found in Arabidopsis thaliana (Mouse-ear cress).